A 491-amino-acid polypeptide reads, in one-letter code: tRNA-2-methylthio-N(6)-dimethylallyladenosine synthase (491 aa).

The MTTase N-terminal domain maps to 3–119; that stretch reads RSYQIRTYGC…LPTLLERARH (117 aa). Cys12, Cys48, Cys82, Cys156, Cys160, and Cys163 together coordinate [4Fe-4S] cluster. In terms of domain architecture, Radical SAM core spans 142–372; that stretch reads RESAYSGWVS…IELQNQISWD (231 aa). The 72-residue stretch at 375–446 folds into the TRAM domain; sequence KELVGRSVEL…PHHLVADSEI (72 aa).

It belongs to the methylthiotransferase family. MiaB subfamily. Monomer. [4Fe-4S] cluster serves as cofactor.

Its subcellular location is the cytoplasm. The enzyme catalyses N(6)-dimethylallyladenosine(37) in tRNA + (sulfur carrier)-SH + AH2 + 2 S-adenosyl-L-methionine = 2-methylsulfanyl-N(6)-dimethylallyladenosine(37) in tRNA + (sulfur carrier)-H + 5'-deoxyadenosine + L-methionine + A + S-adenosyl-L-homocysteine + 2 H(+). Catalyzes the methylthiolation of N6-(dimethylallyl)adenosine (i(6)A), leading to the formation of 2-methylthio-N6-(dimethylallyl)adenosine (ms(2)i(6)A) at position 37 in tRNAs that read codons beginning with uridine. The chain is tRNA-2-methylthio-N(6)-dimethylallyladenosine synthase from Saccharopolyspora erythraea (strain ATCC 11635 / DSM 40517 / JCM 4748 / NBRC 13426 / NCIMB 8594 / NRRL 2338).